The primary structure comprises 540 residues: Probable tubulin polyglutamylase TTLL2 (540 aa).

In terms of domain architecture, TTL spans 41 to 384; that stretch reads LKPLVFRVDE…NGLRSEEKKC (344 aa). Residues Lys169, 175–176, 197–200, and 210–212 contribute to the ATP site; these read RG, QKYI, and KCD. Position 175 (Arg175) interacts with a protein. Position 236 (Arg236) interacts with L-glutamate. Residue 255–256 participates in ATP binding; sequence TN. L-glutamate-binding residues include Ser258 and Lys278. Positions 330, 343, and 345 each coordinate Mg(2+). Residue Lys361 participates in L-glutamate binding. Positions 479 to 499 are disordered; it reads SQSQPHKMKGPAGDLPEAGST.

This sequence belongs to the tubulin--tyrosine ligase family. Requires Mg(2+) as cofactor. Highly expressed in brain, kidney, liver and testis. Expressed in heart, lung, muscle and spleen.

Probable tubulin polyglutamylase that generates side chains of glutamate on the gamma-carboxyl group of specific glutamate residues within the C-terminal tail of target proteins. Similar to TTLL1, may acquire enzymatic activity only in complex with other proteins as it is most likely lacking domains important for autonomous activity. Probably involved in the side-chain initiation step of the polyglutamylation reaction rather than the elongation step. The protein is Probable tubulin polyglutamylase TTLL2 of Mus musculus (Mouse).